The primary structure comprises 603 residues: Probable L-gulonolactone oxidase 6 (603 aa).

An N-terminal signal peptide occupies residues 1–35 (MAFTSSPSYGSLNAAFWRTIFVVHCISTLVFTTIS). Residues 64-246 (STCRAANVAY…SQVTLKLQPM (183 aa)) form the FAD-binding PCMH-type domain.

The protein belongs to the oxygen-dependent FAD-linked oxidoreductase family. FAD serves as cofactor.

The enzyme catalyses L-gulono-1,4-lactone + O2 = L-ascorbate + H2O2 + H(+). The protein operates within cofactor biosynthesis; L-ascorbate biosynthesis. Its function is as follows. May be involved in the biosynthesis of ascorbic acid. This Arabidopsis thaliana (Mouse-ear cress) protein is Probable L-gulonolactone oxidase 6.